The sequence spans 872 residues: Alanine--tRNA ligase (872 aa).

Histidine 571, histidine 575, cysteine 674, and histidine 678 together coordinate Zn(2+).

It belongs to the class-II aminoacyl-tRNA synthetase family. The cofactor is Zn(2+).

Its subcellular location is the cytoplasm. It carries out the reaction tRNA(Ala) + L-alanine + ATP = L-alanyl-tRNA(Ala) + AMP + diphosphate. Functionally, catalyzes the attachment of alanine to tRNA(Ala) in a two-step reaction: alanine is first activated by ATP to form Ala-AMP and then transferred to the acceptor end of tRNA(Ala). Also edits incorrectly charged Ser-tRNA(Ala) and Gly-tRNA(Ala) via its editing domain. This chain is Alanine--tRNA ligase, found in Symbiobacterium thermophilum (strain DSM 24528 / JCM 14929 / IAM 14863 / T).